A 703-amino-acid chain; its full sequence is MSSDLVMPALGRPFTLGMLYDTRREKLIPGFSLFGDETLQQYQSSNTQRSSEFKIVASDSTESKSSAMDIEASLGVSFLGGLVEVGGSAKYLNNTKKYQNQSRVTLKYKATTIYKQFTAPPGTVKVQETVITQRGLATHVVTGILYGANAFFVFDSDKVEDTNLQDIQGKMEAVIKKIPTISIEGSASVQLTDEEKSLASNLSCKFHGDFLLESLPTTFEDAVTTYQTLPTLLGEDGASAVPMKVWLVPLKKFFSKAKLLTQEITVSKVRRIHTTLEELYKLKRRANEAMDDKLVQQIPLIHDKISNFHQIFQDYMLTVQKKIAEKLPLVRAGTESEQSLQKIIDDRAKSPFSNENVSTWLEVIEREIAVLKSCAGMVEGTQAKFVSNQTELDREVLAEDVKHALCFVFTSVERNDPYLKVLSDYLESPDSKDGKEAVPSTEDKWCFSTRVVLKMKQRAQTFCDHVNDFEKSRNVGFFVTALENGKFQGASIYHYKDGSLATQDFTFPRMPFVQGYKKRSDLLWYACDLTFDRNTINIWVSLSDNDTFAASEHGKRQNYPKHPERFLCYNQVLCNEGLTGKHYWEVEWNGYVDVGVAYISISRKEDNWVSAIGHNTCSWVFSSIPRAGYVERYNQRQYYVTVPTPGFKQLGVFLNWPDGSLSFYAVSSDEVHHLHTFKTKFTEPVYPAFCLGYRFDHGTVRLL.

Serine 2 is subject to N-acetylserine. The region spanning 508-703 (PRMPFVQGYK…RFDHGTVRLL (196 aa)) is the B30.2/SPRY domain.

This sequence belongs to the SNTX/VTX toxin family. In terms of assembly, heterodimer of alpha and beta subunits. In terms of processing, not glycosylated. Four intrachain disulfide linkages are present in the heterodimer. No interchain disulfide bound links the two subunits. In terms of tissue distribution, expressed by the venom gland.

Its subcellular location is the secreted. Its function is as follows. Has hemolytic and lethal activities. Its hemolytic activity is inhibited by anionic lipids, especially potently by cardiolipin. In Synanceia verrucosa (Reef stonefish), this protein is Neoverrucotoxin subunit alpha.